A 135-amino-acid chain; its full sequence is Fatty acid-binding protein 5 (135 aa).

Alanine 2 is subject to N-acetylalanine. Lysine 17 carries the N6-acetyllysine modification. The Nuclear localization signal signature appears at 24-34 (KELGVGIALRK). The N-eicosanoyl ethanolamine site is built by cysteine 43 and arginine 109. A disulfide bridge connects residues cysteine 120 and cysteine 127. Residue 129–131 (RIY) participates in (9Z,12Z)-octadecadienoate binding. Position 131 (tyrosine 131) interacts with N-eicosanoyl ethanolamine. Tyrosine 131 is a hexadecanoate binding site. Tyrosine 131 carries the post-translational modification Phosphotyrosine.

This sequence belongs to the calycin superfamily. Fatty-acid binding protein (FABP) family. In terms of assembly, monomer. Homodimer. In terms of tissue distribution, keratinocytes; highly expressed in psoriatic skin. Expressed in brain gray matter.

Its subcellular location is the cytoplasm. The protein localises to the nucleus. The protein resides in the synapse. It localises to the postsynaptic density. It is found in the secreted. The catalysed reaction is hexadecanoate(out) = hexadecanoate(in). It carries out the reaction (9Z,12Z)-octadecadienoate(out) = (9Z,12Z)-octadecadienoate(in). The enzyme catalyses (9Z)-octadecenoate(out) = (9Z)-octadecenoate(in). Intracellular carrier for long-chain fatty acids and related active lipids, such as endocannabinoids, that regulate the metabolism and actions of the ligands they bind. In addition to the cytosolic transport, selectively delivers specific fatty acids from the cytosol to the nucleus, wherein they activate nuclear receptors. Delivers retinoic acid to the nuclear receptor peroxisome proliferator-activated receptor delta; which promotes proliferation and survival. May also serve as a synaptic carrier of endocannabinoid at central synapses and thus controls retrograde endocannabinoid signaling. Modulates inflammation by regulating PTGES induction via NF-kappa-B activation, and prostaglandin E2 (PGE2) biosynthesis during inflammation. May be involved in keratinocyte differentiation. The polypeptide is Fatty acid-binding protein 5 (Homo sapiens (Human)).